Here is a 132-residue protein sequence, read N- to C-terminus: Fatty acid-binding protein, adipocyte (132 aa).

Residues 22–32 (KELGVGFATRK) carry the Nuclear localization signal motif. Positions 107 and 127 each coordinate (9Z,12Z)-octadecadienoate.

This sequence belongs to the calycin superfamily. Fatty-acid binding protein (FABP) family. In terms of assembly, monomer.

Its subcellular location is the cytoplasm. The protein localises to the nucleus. Lipid transport protein in adipocytes. Binds both long chain fatty acids and retinoic acid. Delivers long-chain fatty acids and retinoic acid to their cognate receptors in the nucleus. Has the highest binding affinity for linoleic acid and decreasing relative affinity for eicosapentaenoic acid (EPA), alpha-linolenic acid (ALA), docosahexaenoic acid (DHA), oleic acid, palmitic acid and stearic acid, respectively. In Pygoscelis papua (Gentoo penguin), this protein is Fatty acid-binding protein, adipocyte.